The sequence spans 543 residues: MAHAHIQGGRRAKSRFVVCIMSGARSKLALFLCGCYVVALGAHTGEESVADHHEAEYYVAAVYEHPSILSLNPLALISRQEALELMNQNLDIYEQQVMTAAQKDVQIIVFPEDGIHGFNFTRTSIYPFLDFMPSPQVVRWNPCLEPHRFNDTEVLQRLSCMAIRGDMFLVANLGTKEPCHSSDPRCPKDGRYQFNTNVVFSNNGTLVDRYRKHNLYFEAAFDVPLKVDLITFDTPFAGRFGIFTCFDILFFDPAIRVLRDYKVKHVVYPTAWMNQLPLLAAIEIQKAFAVAFGINVLAANVHHPVLGMTGSGIHTPLESFWYHDMENPKSHLIIAQVAKNPVGLIGAENATGETDPSHSKFLKILSGDPYCEKDAQEVHCDEATKWNVNAPPTFHSEMMYDNFTLVPVWGKEGYLHVCSNGLCCYLLYERPTLSKELYALGVFDGLHTVHGTYYIQVCALVRCGGLGFDTCGQEITEATGIFEFHLWGNFSTSYIFPLFLTSGMTLEVPDQLGWENDHYFLRKSRLSSGLVTAALYGRLYERD.

The signal sequence occupies residues 1 to 41; that stretch reads MAHAHIQGGRRAKSRFVVCIMSGARSKLALFLCGCYVVALG. A CN hydrolase domain is found at 72–351; it reads NPLALISRQE…VGLIGAENAT (280 aa). The active-site Proton acceptor is Glu-112. N-linked (GlcNAc...) asparagine glycosylation is present at Asn-119. N-linked (GlcNAc...) (complex) asparagine glycosylation is present at Asn-150. N-linked (GlcNAc...) asparagine glycosylation occurs at Asn-203. The Proton donor role is filled by Lys-212. The Nucleophile role is filled by Cys-245. N-linked (GlcNAc...) asparagine glycans are attached at residues Asn-349, Asn-402, and Asn-489.

It belongs to the carbon-nitrogen hydrolase superfamily. BTD/VNN family.

The protein localises to the secreted. The protein resides in the extracellular space. The enzyme catalyses biocytin + H2O = biotin + L-lysine. It carries out the reaction biotin amide + H2O = biotin + NH4(+). Its function is as follows. Catalytic release of biotin from biocytin, the product of biotin-dependent carboxylases degradation. This Homo sapiens (Human) protein is Biotinidase.